Here is a 411-residue protein sequence, read N- to C-terminus: UPF0597 protein Fnod_1278 (411 aa).

The protein belongs to the UPF0597 family.

The chain is UPF0597 protein Fnod_1278 from Fervidobacterium nodosum (strain ATCC 35602 / DSM 5306 / Rt17-B1).